The primary structure comprises 198 residues: HTH-type transcriptional regulator BetI (198 aa).

Positions Pro-8–Leu-68 constitute an HTH tetR-type domain. The H-T-H motif DNA-binding region spans Thr-31–Phe-50.

It functions in the pathway amine and polyamine biosynthesis; betaine biosynthesis via choline pathway [regulation]. In terms of biological role, repressor involved in the biosynthesis of the osmoprotectant glycine betaine. It represses transcription of the choline transporter BetT and the genes of BetAB involved in the synthesis of glycine betaine. This chain is HTH-type transcriptional regulator BetI, found in Brucella melitensis biotype 2 (strain ATCC 23457).